Consider the following 99-residue polypeptide: Nucleoid-associated protein UPA3_0088 (99 aa).

It belongs to the YbaB/EbfC family. In terms of assembly, homodimer.

The protein localises to the cytoplasm. Its subcellular location is the nucleoid. Its function is as follows. Binds to DNA and alters its conformation. May be involved in regulation of gene expression, nucleoid organization and DNA protection. The sequence is that of Nucleoid-associated protein UPA3_0088 from Ureaplasma parvum serovar 3 (strain ATCC 27815 / 27 / NCTC 11736).